The following is a 343-amino-acid chain: Protein RecA (343 aa).

66 to 73 (GPESSGKT) provides a ligand contact to ATP. The interval 319–343 (IERQIREKHLPKRSAKADEAESAEA) is disordered.

This sequence belongs to the RecA family.

The protein localises to the cytoplasm. Its function is as follows. Can catalyze the hydrolysis of ATP in the presence of single-stranded DNA, the ATP-dependent uptake of single-stranded DNA by duplex DNA, and the ATP-dependent hybridization of homologous single-stranded DNAs. It interacts with LexA causing its activation and leading to its autocatalytic cleavage. This chain is Protein RecA, found in Thioalkalivibrio sulfidiphilus (strain HL-EbGR7).